The chain runs to 394 residues: Ornithine aminotransferase 1 (394 aa).

Lys252 is modified (N6-(pyridoxal phosphate)lysine).

This sequence belongs to the class-III pyridoxal-phosphate-dependent aminotransferase family. OAT subfamily. Pyridoxal 5'-phosphate serves as cofactor.

The protein localises to the cytoplasm. It catalyses the reaction a 2-oxocarboxylate + L-ornithine = L-glutamate 5-semialdehyde + an L-alpha-amino acid. It functions in the pathway amino-acid biosynthesis; L-proline biosynthesis; L-glutamate 5-semialdehyde from L-ornithine: step 1/1. Catalyzes the interconversion of ornithine to glutamate semialdehyde. The sequence is that of Ornithine aminotransferase 1 from Staphylococcus aureus (strain COL).